Here is a 192-residue protein sequence, read N- to C-terminus: Small ribosomal subunit protein uS5 (192 aa).

Residues 20 to 83 form the S5 DRBM domain; it reads FVDRLVHINR…EAAKRGLIRV (64 aa). A disordered region spans residues 165-192; it reads ARRGLKVSALQARRRDAEPGSADSADAA.

The protein belongs to the universal ribosomal protein uS5 family. Part of the 30S ribosomal subunit. Contacts proteins S4 and S8.

Its function is as follows. With S4 and S12 plays an important role in translational accuracy. In terms of biological role, located at the back of the 30S subunit body where it stabilizes the conformation of the head with respect to the body. This chain is Small ribosomal subunit protein uS5, found in Methylobacterium sp. (strain 4-46).